The sequence spans 341 residues: L-threonine 3-dehydrogenase (341 aa).

Position 38 (cysteine 38) interacts with Zn(2+). Catalysis depends on charge relay system residues threonine 40 and histidine 43. Residues histidine 63, glutamate 64, cysteine 93, cysteine 96, cysteine 99, and cysteine 107 each coordinate Zn(2+). NAD(+)-binding positions include isoleucine 175, aspartate 195, arginine 200, 262 to 264 (LGI), and 286 to 287 (IY).

This sequence belongs to the zinc-containing alcohol dehydrogenase family. In terms of assembly, homotetramer. Zn(2+) serves as cofactor.

Its subcellular location is the cytoplasm. The enzyme catalyses L-threonine + NAD(+) = (2S)-2-amino-3-oxobutanoate + NADH + H(+). Its pathway is amino-acid degradation; L-threonine degradation via oxydo-reductase pathway; glycine from L-threonine: step 1/2. Functionally, catalyzes the NAD(+)-dependent oxidation of L-threonine to 2-amino-3-ketobutyrate. The sequence is that of L-threonine 3-dehydrogenase from Yersinia enterocolitica serotype O:8 / biotype 1B (strain NCTC 13174 / 8081).